We begin with the raw amino-acid sequence, 426 residues long: 3-phosphoshikimate 1-carboxyvinyltransferase (426 aa).

3-phosphoshikimate is bound by residues K21, S22, and R26. K21 contributes to the phosphoenolpyruvate binding site. Phosphoenolpyruvate is bound by residues G92 and R122. 3-phosphoshikimate is bound by residues S167, S168, Q169, S195, D315, and K342. Phosphoenolpyruvate is bound at residue Q169. D315 serves as the catalytic Proton acceptor. Positions 346 and 386 each coordinate phosphoenolpyruvate.

Belongs to the EPSP synthase family. In terms of assembly, monomer.

Its subcellular location is the cytoplasm. It catalyses the reaction 3-phosphoshikimate + phosphoenolpyruvate = 5-O-(1-carboxyvinyl)-3-phosphoshikimate + phosphate. Its pathway is metabolic intermediate biosynthesis; chorismate biosynthesis. In terms of biological role, catalyzes the transfer of the enolpyruvyl moiety of phosphoenolpyruvate (PEP) to the 5-hydroxyl of shikimate-3-phosphate (S3P) to produce enolpyruvyl shikimate-3-phosphate and inorganic phosphate. The protein is 3-phosphoshikimate 1-carboxyvinyltransferase of Methanosphaera stadtmanae (strain ATCC 43021 / DSM 3091 / JCM 11832 / MCB-3).